A 295-amino-acid chain; its full sequence is Ribosomal protein L11 methyltransferase (295 aa).

Thr145, Gly166, Asp188, and Asn230 together coordinate S-adenosyl-L-methionine.

This sequence belongs to the methyltransferase superfamily. PrmA family.

It is found in the cytoplasm. The catalysed reaction is L-lysyl-[protein] + 3 S-adenosyl-L-methionine = N(6),N(6),N(6)-trimethyl-L-lysyl-[protein] + 3 S-adenosyl-L-homocysteine + 3 H(+). Functionally, methylates ribosomal protein L11. This is Ribosomal protein L11 methyltransferase from Pectobacterium carotovorum subsp. carotovorum (strain PC1).